The sequence spans 253 residues: Ribosome maturation protein SBDS (253 aa).

This sequence belongs to the SDO1/SBDS family. As to quaternary structure, associates with the 60S ribosomal subunit.

It is found in the cytoplasm. The protein localises to the nucleus. It localises to the nucleolus. Its subcellular location is the nucleoplasm. The protein resides in the cytoskeleton. It is found in the spindle. Required for the assembly of mature ribosomes and ribosome biogenesis. Together with K10C3.5b/EFL1, triggers the GTP-dependent release of ribosome maturation factors from 60S pre-ribosomes in the cytoplasm, thereby activating ribosomes for translation competence by allowing 80S ribosome assembly. Required for normal levels of protein synthesis. May play a role in cellular stress resistance. May play a role in cellular response to DNA damage. May play a role in cell proliferation. The protein is Ribosome maturation protein SBDS (sbds-1) of Caenorhabditis elegans.